Consider the following 258-residue polypeptide: Imidazole glycerol phosphate synthase subunit HisF (258 aa).

Active-site residues include D12 and D131.

It belongs to the HisA/HisF family. As to quaternary structure, heterodimer of HisH and HisF.

It is found in the cytoplasm. It catalyses the reaction 5-[(5-phospho-1-deoxy-D-ribulos-1-ylimino)methylamino]-1-(5-phospho-beta-D-ribosyl)imidazole-4-carboxamide + L-glutamine = D-erythro-1-(imidazol-4-yl)glycerol 3-phosphate + 5-amino-1-(5-phospho-beta-D-ribosyl)imidazole-4-carboxamide + L-glutamate + H(+). The protein operates within amino-acid biosynthesis; L-histidine biosynthesis; L-histidine from 5-phospho-alpha-D-ribose 1-diphosphate: step 5/9. Functionally, IGPS catalyzes the conversion of PRFAR and glutamine to IGP, AICAR and glutamate. The HisF subunit catalyzes the cyclization activity that produces IGP and AICAR from PRFAR using the ammonia provided by the HisH subunit. The polypeptide is Imidazole glycerol phosphate synthase subunit HisF (Sinorhizobium fredii (strain NBRC 101917 / NGR234)).